A 229-amino-acid polypeptide reads, in one-letter code: Cytochrome c oxidase subunit 2 (229 aa).

Residues 1-26 (MSTWANLGLQDSASPLMEQLIFFHDH) are Mitochondrial intermembrane-facing. A helical transmembrane segment spans residues 27 to 48 (ALLILVMITVLVGYLMFMLFFN). The Mitochondrial matrix portion of the chain corresponds to 49-62 (SYVNRFLLHGQLIE). Residues 63 to 82 (MIWTILPAIILLFIAMPSLR) traverse the membrane as a helical segment. Over 83–229 (LLYLLDEINE…IKWISSTVNS (147 aa)) the chain is Mitochondrial intermembrane. Residues His161, Cys196, Glu198, Cys200, His204, and Met207 each coordinate Cu cation. Position 198 (Glu198) interacts with Mg(2+).

This sequence belongs to the cytochrome c oxidase subunit 2 family. Component of the cytochrome c oxidase (complex IV, CIV), a multisubunit enzyme composed of a catalytic core of 3 subunits and several supernumerary subunits. The complex exists as a monomer or a dimer and forms supercomplexes (SCs) in the inner mitochondrial membrane with ubiquinol-cytochrome c oxidoreductase (cytochrome b-c1 complex, complex III, CIII). It depends on Cu cation as a cofactor.

It is found in the mitochondrion inner membrane. The catalysed reaction is 4 Fe(II)-[cytochrome c] + O2 + 8 H(+)(in) = 4 Fe(III)-[cytochrome c] + 2 H2O + 4 H(+)(out). Functionally, component of the cytochrome c oxidase, the last enzyme in the mitochondrial electron transport chain which drives oxidative phosphorylation. The respiratory chain contains 3 multisubunit complexes succinate dehydrogenase (complex II, CII), ubiquinol-cytochrome c oxidoreductase (cytochrome b-c1 complex, complex III, CIII) and cytochrome c oxidase (complex IV, CIV), that cooperate to transfer electrons derived from NADH and succinate to molecular oxygen, creating an electrochemical gradient over the inner membrane that drives transmembrane transport and the ATP synthase. Cytochrome c oxidase is the component of the respiratory chain that catalyzes the reduction of oxygen to water. Electrons originating from reduced cytochrome c in the intermembrane space (IMS) are transferred via the dinuclear copper A center (CU(A)) of subunit 2 and heme A of subunit 1 to the active site in subunit 1, a binuclear center (BNC) formed by heme A3 and copper B (CU(B)). The BNC reduces molecular oxygen to 2 water molecules using 4 electrons from cytochrome c in the IMS and 4 protons from the mitochondrial matrix. The chain is Cytochrome c oxidase subunit 2 (mt:CoII) from Drosophila lowei (Fruit fly).